A 1082-amino-acid chain; its full sequence is Inner tegument protein (1082 aa).

Positions 604–1082 (DHIECLFNVS…QQDLITPLKF (479 aa)) are interaction with large tegument protein.

It belongs to the herpesviridae inner tegument protein family. In terms of assembly, interacts (via C-terminus) with the large tegument protein/LTP (via N-terminus).

It is found in the virion tegument. The protein localises to the host cytoplasm. It localises to the host nucleus. Its subcellular location is the host Golgi apparatus. The protein resides in the host trans-Golgi network. Its function is as follows. Plays an essential role in cytoplasmic secondary envelopment during viral egress. Interacts with the capsid via the large tegument protein/LTP and participates in its transport to the host trans-Golgi network (TGN) where secondary envelopment occurs. Modulates tegumentation and capsid accumulation at the viral assembly complex. This is Inner tegument protein (U30) from Homo sapiens (Human).